The sequence spans 413 residues: Chloramphenicol resistance protein CraA (413 aa).

The next 12 membrane-spanning stretches (helical) occupy residues 18–38 (LMFP…NDLI), 55–75 (WAPS…WLLG), 84–104 (KKVL…ILLT), 110–130 (FLTL…VGYA), 147–167 (LMAN…AFLI), 170–190 (VSWH…WVGL), 228–248 (ALPL…IILV), 260–280 (LAQF…IKII), 289–309 (VLIG…GVVW), 312–332 (YLIP…GISF), 349–369 (TVAA…IELV), and 373–393 (YTQF…ALWF).

This sequence belongs to the major facilitator superfamily.

The protein localises to the cell inner membrane. Efflux pump that mediates resistance to chloramphenicol. This Acinetobacter baumannii (strain ATCC 19606 / DSM 30007 / JCM 6841 / CCUG 19606 / CIP 70.34 / NBRC 109757 / NCIMB 12457 / NCTC 12156 / 81) protein is Chloramphenicol resistance protein CraA.